The sequence spans 568 residues: Tyrosine-protein kinase transforming protein Src (568 aa).

A disordered region spans residues 1-58 (MGSSKSKPKDPSQRRRSLEPPDSTHHGGFPASQTPNKTAAPDTHRTPSRSFGTVATEP). Residue G2 is the site of N-myristoyl glycine; by host attachment. Residues 7-25 (KPKDPSQRRRSLEPPDSTH) are compositionally biased toward basic and acidic residues. The SH3 domain occupies 81–142 (GGVTTFVALY…PSNYVAPSDS (62 aa)). An SH2 domain is found at 148–245 (WYFGKITRRE…GLCHRLTNVC (98 aa)). The Protein kinase domain maps to 267–520 (LRLEVKLGQG…YLQAFLEDYF (254 aa)). ATP-binding positions include 273-281 (LGQGCFGEV) and K295. The active-site Proton acceptor is the D386. Position 416 is a phosphotyrosine; by autocatalysis (Y416).

The protein belongs to the protein kinase superfamily. Tyr protein kinase family. SRC subfamily. The phosphorylated form is termed pp60v-src.

The enzyme catalyses L-tyrosyl-[protein] + ATP = O-phospho-L-tyrosyl-[protein] + ADP + H(+). Its function is as follows. This phosphoprotein, required for both the initiation and the maintenance of neoplastic transformation, is a protein kinase that catalyzes the phosphorylation of tyrosine residues in vitro. The protein is Tyrosine-protein kinase transforming protein Src (V-SRC) of Galliformes.